The primary structure comprises 224 residues: MTKKICIAIDGPAAAGKSTVAKIVAKKLRFVYIDTGAMYRAVTYIAQKNNLAYEDETAIAQLLQKTVIRFEPGEVQQVFINDENVTEVIRSLEVTNHVSIVAAHPAIREALQERQQIFATEGGIVMDGRDIGTAVLPNAELKIFLLASVEERAERRFKENVAKGFAGDLNQLKKEIEERDHLDYTREHSPLKKAEDAIEVDTTSMSIEEVANKILSLAEQKINN.

Residue 11–19 coordinates ATP; that stretch reads GPAAAGKST.

It belongs to the cytidylate kinase family. Type 1 subfamily.

Its subcellular location is the cytoplasm. It carries out the reaction CMP + ATP = CDP + ADP. The catalysed reaction is dCMP + ATP = dCDP + ADP. The chain is Cytidylate kinase from Listeria welshimeri serovar 6b (strain ATCC 35897 / DSM 20650 / CCUG 15529 / CIP 8149 / NCTC 11857 / SLCC 5334 / V8).